Reading from the N-terminus, the 561-residue chain is Urocanate hydratase (561 aa).

Residues 52 to 53, Gln-130, 176 to 178, Glu-196, Arg-201, 242 to 243, 263 to 267, 273 to 274, and Tyr-322 contribute to the NAD(+) site; these read GG, GMG, NA, QTSAH, and YL. The active site involves Cys-410. An NAD(+)-binding site is contributed by Gly-492.

Belongs to the urocanase family. It depends on NAD(+) as a cofactor.

It localises to the cytoplasm. The enzyme catalyses 4-imidazolone-5-propanoate = trans-urocanate + H2O. It functions in the pathway amino-acid degradation; L-histidine degradation into L-glutamate; N-formimidoyl-L-glutamate from L-histidine: step 2/3. In terms of biological role, catalyzes the conversion of urocanate to 4-imidazolone-5-propionate. In Salmonella choleraesuis (strain SC-B67), this protein is Urocanate hydratase.